A 261-amino-acid chain; its full sequence is 7beta-hydroxysteroid dehydrogenase (261 aa).

Residues 17-21, 40-41, and 66-67 each bind NADP(+); these read TEGIG, RR, and DL. Tyr156 serves as the catalytic Proton acceptor.

It belongs to the short-chain dehydrogenases/reductases (SDR) family. As to quaternary structure, homodimer.

The enzyme catalyses a 7beta-hydroxysteroid + NADP(+) = a 7-oxosteroid + NADPH + H(+). The catalysed reaction is ursocholate + NADP(+) = 3alpha,12alpha-dihydroxy-7-oxo-5beta-cholanate + NADPH + H(+). It catalyses the reaction 7-oxolithocholate + NADPH + H(+) = ursodeoxycholate + NADP(+). It carries out the reaction 3alpha,7beta-dihydroxy-12-oxo-5beta-cholan-24-oate + NADP(+) = 7,12-dioxo-lithocholate + NADPH + H(+). The enzyme catalyses 7beta-hydroxy-3,12-dioxo-5beta-cholan-24-oate + NADP(+) = dehydrocholate + NADPH + H(+). Its function is as follows. 7beta-hydroxysteroid dehydrogenase that catalyzes the reduction of the 7-oxo group of 7-oxosteroids, such as 3alpha,12alpha-dihydroxy-7-oxo-5beta-cholanate, 7-oxolithocholate, 7,12-dioxo-lithocholate and dehydrocholate, to the corresponding 7beta-hydroxysteroids. Is also able to catalyze the reverse oxidation reactions. Together with 7alpha-HSDH encoded in the adjacent gene, is likely involved in the epimerization of the hydroxy group at C-7 of primary bile acids through 7-keto bile acid intermediates. This Clostridium sardiniense (Clostridium absonum) protein is 7beta-hydroxysteroid dehydrogenase.